The following is a 312-amino-acid chain: Malate dehydrogenase (312 aa).

NAD(+) is bound by residues Gly7–Gly13 and Asp34. Substrate contacts are provided by Arg81 and Arg87. NAD(+)-binding positions include Asn94 and Ile117–Asn119. Substrate contacts are provided by Asn119 and Arg153. His177 (proton acceptor) is an active-site residue. Met227 contributes to the NAD(+) binding site.

It belongs to the LDH/MDH superfamily. MDH type 1 family. As to quaternary structure, homodimer.

The enzyme catalyses (S)-malate + NAD(+) = oxaloacetate + NADH + H(+). Functionally, catalyzes the reversible oxidation of malate to oxaloacetate. This Salmonella newport (strain SL254) protein is Malate dehydrogenase.